We begin with the raw amino-acid sequence, 1129 residues long: ATP-dependent DNA helicase mph1 (1129 aa).

Disordered stretches follow at residues 1 to 101 (MTGS…FEDA), 124 to 222 (TQLT…QNEG), and 236 to 306 (DAFD…TQHK). The segment covering 45-63 (DGTASDVRRRPSENRESQR) has biased composition (basic and acidic residues). Polar residues-rich tracts occupy residues 203–222 (NTKAPTHQPITRSPTVQNEG) and 242–285 (ISLS…QTDQ). Residues 297-306 (QKDEPPTQHK) are compositionally biased toward basic and acidic residues. The region spanning 331–499 (IAQKGLFHNL…AVIDGLDIAR (169 aa)) is the Helicase ATP-binding domain. 344–351 (LPTGLGKT) is a binding site for ATP. The DEAH box signature appears at 447 to 450 (DEAH). In terms of domain architecture, Helicase C-terminal spans 674-843 (VLNHFMDAGE…GSRFTFHDDI (170 aa)). Disordered regions lie at residues 863-930 (IPDE…VEIP), 1018-1060 (RQGD…STED), and 1072-1129 (SVVK…DSDD). Composition is skewed to basic residues over residues 877-889 (RRGRAPKRPPKKF) and 1028-1044 (SPRHERRRRLSKTKPRY). Residues 1077–1086 (QKQQPFYSSQ) show a composition bias toward polar residues.

Belongs to the DEAD box helicase family. DEAH subfamily. FANCM sub-subfamily. As to quaternary structure, interacts with the MHF histone-fold complex to form the FANCM-MHF complex.

The protein resides in the nucleus. It carries out the reaction ATP + H2O = ADP + phosphate + H(+). Its function is as follows. ATP-dependent DNA helicase involved in DNA damage repair by homologous recombination and in genome maintenance. Capable of unwinding D-loops. Plays a role in limiting crossover recombinants during mitotic DNA double-strand break (DSB) repair. Component of a FANCM-MHF complex which promotes gene conversion at blocked replication forks, probably by reversal of the stalled fork. The sequence is that of ATP-dependent DNA helicase mph1 from Aspergillus oryzae (strain ATCC 42149 / RIB 40) (Yellow koji mold).